The primary structure comprises 309 residues: (S)-sulfolactate dehydrogenase (309 aa).

NAD(+)-binding positions include G151–I152, D171, T231–R233, and D257. R233 is an active-site residue. The active site involves E262. The active-site Proton donor is H281. An NAD(+)-binding site is contributed by H281–G284.

Belongs to the D-isomer specific 2-hydroxyacid dehydrogenase family.

It carries out the reaction (2S)-3-sulfolactate + NAD(+) = 3-sulfopyruvate + NADH + H(+). Functionally, dehydrogenase of the (R,S)-sulfolactate degradation pathway that only acts on the (S)-enantiomer of 3-sulfolactate. Together with ComC, provides a racemase system that converts (2S)-3-sulfolactate to (2R)-3-sulfolactate, which is degraded further by (2R)-sulfolactate sulfo-lyase. Specific for NAD. Also able to form sulfolactate from sulfopyruvate. The protein is (S)-sulfolactate dehydrogenase (slcC) of Chromohalobacter salexigens (strain ATCC BAA-138 / DSM 3043 / CIP 106854 / NCIMB 13768 / 1H11).